Consider the following 901-residue polypeptide: Disease resistance RPP8-like protein 3 (901 aa).

Residues 15–56 are a coiled coil; sequence ALLNRESERLNGIDEQVDGLKRQLRGLQSLLKDADAKKHGSD. An NB-ARC domain is found at 144–453; that stretch reads LQDIQREIRQ…AEGIYDGLTI (310 aa). ATP is bound by residues 190–197 and 385–392; these read GMGGIGKT and GAQIVGKS. LRR repeat units follow at residues 567-591, 592-615, and 833-858; these read LPLLRVLDLSSVKFEGGKLPSSIGG, LIHLRFLSLHQAVVSHLPSTIRNL, and MPCLRDLIIHSCEKLEELPDGLKYVT.

The protein belongs to the disease resistance NB-LRR family. RPP8/HRT subfamily.

Functionally, disease resistance protein. The polypeptide is Disease resistance RPP8-like protein 3 (RPP8L3) (Arabidopsis thaliana (Mouse-ear cress)).